Consider the following 325-residue polypeptide: Replication factor C small subunit (325 aa).

ATP is bound at residue 52–59 (GPAGVGKT).

Belongs to the activator 1 small subunits family. RfcS subfamily. As to quaternary structure, heteromultimer composed of small subunits (RfcS) and large subunits (RfcL).

In terms of biological role, part of the RFC clamp loader complex which loads the PCNA sliding clamp onto DNA. The protein is Replication factor C small subunit of Natronomonas pharaonis (strain ATCC 35678 / DSM 2160 / CIP 103997 / JCM 8858 / NBRC 14720 / NCIMB 2260 / Gabara) (Halobacterium pharaonis).